Reading from the N-terminus, the 208-residue chain is Ubiquinone biosynthesis protein COQ4 homolog, mitochondrial (208 aa).

The Zn(2+) site is built by H105, D106, H109, and E122.

It belongs to the COQ4 family. As to quaternary structure, component of a multi-subunit COQ enzyme complex. It depends on Zn(2+) as a cofactor.

It is found in the mitochondrion inner membrane. The enzyme catalyses a 4-hydroxy-3-methoxy-5-(all-trans-polyprenyl)benzoate + H(+) = a 2-methoxy-6-(all-trans-polyprenyl)phenol + CO2. Its pathway is cofactor biosynthesis; ubiquinone biosynthesis. Its function is as follows. Lyase that catalyzes the C1-decarboxylation of 4-hydroxy-3-methoxy-5-(all-trans-polyprenyl)benzoic acid into 2-methoxy-6-(all-trans-polyprenyl)phenol during ubiquinone biosynthesis. This is Ubiquinone biosynthesis protein COQ4 homolog, mitochondrial from Nematostella vectensis (Starlet sea anemone).